Reading from the N-terminus, the 128-residue chain is Fatty acid binding protein 1-B.1 (128 aa).

It belongs to the calycin superfamily. Fatty-acid binding protein (FABP) family. Expressed in the yolk syncytial layer (YSL) and subsequently in the intestinal bulb in developing embryos and larvae. In adults, expressed in the intestine.

The protein localises to the cytoplasm. Functionally, binds free fatty acids and their coenzyme A derivatives, bilirubin, and some other small molecules in the cytoplasm. May be involved in intracellular lipid transport. This is Fatty acid binding protein 1-B.1 (fabp1b.1) from Danio rerio (Zebrafish).